Consider the following 186-residue polypeptide: GMP synthase [glutamine-hydrolyzing] subunit A (186 aa).

The region spanning 3-186 (MILIINNHGQ…FENFYDVCRS (184 aa)) is the Glutamine amidotransferase type-1 domain. Cysteine 77 serves as the catalytic Nucleophile. Active-site residues include histidine 164 and glutamate 166.

In terms of assembly, heterodimer composed of a glutamine amidotransferase subunit (A) and a GMP-binding subunit (B).

It carries out the reaction XMP + L-glutamine + ATP + H2O = GMP + L-glutamate + AMP + diphosphate + 2 H(+). Its pathway is purine metabolism; GMP biosynthesis; GMP from XMP (L-Gln route): step 1/1. Its function is as follows. Catalyzes the synthesis of GMP from XMP. The protein is GMP synthase [glutamine-hydrolyzing] subunit A of Methanothermobacter thermautotrophicus (strain ATCC 29096 / DSM 1053 / JCM 10044 / NBRC 100330 / Delta H) (Methanobacterium thermoautotrophicum).